The sequence spans 180 residues: MQGLPTIILVGPMGAGKSTIGRLLAAELQREFFDSDHEIEARCGANIAWIFDVEGEAGFRDRETAMLRELASLDAVVLATGGGAVMREDNRQALRERGTVVYLATSVEQQIRRTARDRNRPLLRQGNPEQVLRDLFAKRDPLYRATADLVVRTDRRGPRAVVNEIIRRTKRLSDPLDLKA.

14–19 (GAGKST) contacts ATP. Ser-18 is a binding site for Mg(2+). Asp-36, Arg-60, and Gly-82 together coordinate substrate. Arg-120 contributes to the ATP binding site. Arg-139 is a binding site for substrate.

Belongs to the shikimate kinase family. As to quaternary structure, monomer. Requires Mg(2+) as cofactor.

It is found in the cytoplasm. The catalysed reaction is shikimate + ATP = 3-phosphoshikimate + ADP + H(+). Its pathway is metabolic intermediate biosynthesis; chorismate biosynthesis; chorismate from D-erythrose 4-phosphate and phosphoenolpyruvate: step 5/7. Its function is as follows. Catalyzes the specific phosphorylation of the 3-hydroxyl group of shikimic acid using ATP as a cosubstrate. In Chromohalobacter salexigens (strain ATCC BAA-138 / DSM 3043 / CIP 106854 / NCIMB 13768 / 1H11), this protein is Shikimate kinase.